We begin with the raw amino-acid sequence, 872 residues long: Alanine--tRNA ligase (872 aa).

Zn(2+)-binding residues include histidine 563, histidine 567, cysteine 665, and histidine 669.

It belongs to the class-II aminoacyl-tRNA synthetase family. Zn(2+) serves as cofactor.

It localises to the cytoplasm. The catalysed reaction is tRNA(Ala) + L-alanine + ATP = L-alanyl-tRNA(Ala) + AMP + diphosphate. Functionally, catalyzes the attachment of alanine to tRNA(Ala) in a two-step reaction: alanine is first activated by ATP to form Ala-AMP and then transferred to the acceptor end of tRNA(Ala). Also edits incorrectly charged Ser-tRNA(Ala) and Gly-tRNA(Ala) via its editing domain. The polypeptide is Alanine--tRNA ligase (Bacteroides fragilis (strain YCH46)).